A 198-amino-acid polypeptide reads, in one-letter code: Probable chemoreceptor glutamine deamidase CheD (198 aa).

Belongs to the CheD family.

It catalyses the reaction L-glutaminyl-[protein] + H2O = L-glutamyl-[protein] + NH4(+). Its function is as follows. Probably deamidates glutamine residues to glutamate on methyl-accepting chemotaxis receptors (MCPs), playing an important role in chemotaxis. In Stenotrophomonas maltophilia (strain K279a), this protein is Probable chemoreceptor glutamine deamidase CheD.